A 391-amino-acid chain; its full sequence is 8-amino-7-oxononanoate synthase (391 aa).

Residue Gly-108 to Phe-109 coordinates pyridoxal 5'-phosphate. His-133 contributes to the substrate binding site. Residues Ser-180, His-208, and Thr-236 each contribute to the pyridoxal 5'-phosphate site. At Lys-239 the chain carries N6-(pyridoxal phosphate)lysine. Position 353 (Thr-353) interacts with substrate.

This sequence belongs to the class-II pyridoxal-phosphate-dependent aminotransferase family. BioF subfamily. Homodimer. It depends on pyridoxal 5'-phosphate as a cofactor.

It carries out the reaction 6-carboxyhexanoyl-[ACP] + L-alanine + H(+) = (8S)-8-amino-7-oxononanoate + holo-[ACP] + CO2. The protein operates within cofactor biosynthesis; biotin biosynthesis. Its function is as follows. Catalyzes the decarboxylative condensation of pimeloyl-[acyl-carrier protein] and L-alanine to produce 8-amino-7-oxononanoate (AON), [acyl-carrier protein], and carbon dioxide. This chain is 8-amino-7-oxononanoate synthase, found in Thermosipho melanesiensis (strain DSM 12029 / CIP 104789 / BI429).